We begin with the raw amino-acid sequence, 119 residues long: Hydrogenase maturation factor HypA (119 aa).

A Ni(2+)-binding site is contributed by His2. 4 residues coordinate Zn(2+): Cys73, Cys76, Cys89, and Cys92.

It belongs to the HypA/HybF family.

Its function is as follows. Involved in the maturation of [NiFe] hydrogenases. Required for nickel insertion into the metal center of the hydrogenase. This is Hydrogenase maturation factor HypA from Dehalococcoides mccartyi (strain ATCC BAA-2100 / JCM 16839 / KCTC 5957 / BAV1).